The following is a 646-amino-acid chain: Phosphomethylpyrimidine synthase (646 aa).

Residues N235, M264, Y293, H329, 349–351 (SRG), 390–393 (DGLR), and E429 each bind substrate. H433 provides a ligand contact to Zn(2+). A substrate-binding site is contributed by Y456. H497 contacts Zn(2+). Positions 577, 580, and 585 each coordinate [4Fe-4S] cluster.

This sequence belongs to the ThiC family. As to quaternary structure, homodimer. [4Fe-4S] cluster serves as cofactor.

It catalyses the reaction 5-amino-1-(5-phospho-beta-D-ribosyl)imidazole + S-adenosyl-L-methionine = 4-amino-2-methyl-5-(phosphooxymethyl)pyrimidine + CO + 5'-deoxyadenosine + formate + L-methionine + 3 H(+). It participates in cofactor biosynthesis; thiamine diphosphate biosynthesis. In terms of biological role, catalyzes the synthesis of the hydroxymethylpyrimidine phosphate (HMP-P) moiety of thiamine from aminoimidazole ribotide (AIR) in a radical S-adenosyl-L-methionine (SAM)-dependent reaction. This Vibrio campbellii (strain ATCC BAA-1116) protein is Phosphomethylpyrimidine synthase.